A 189-amino-acid polypeptide reads, in one-letter code: Glutathione-dependent formaldehyde-activating enzyme (189 aa).

The CENP-V/GFA domain maps to 20 to 166; sequence FAGGTLVCAC…LRTIGLEPYD (147 aa). 7 residues coordinate Zn(2+): Cys-27, Cys-29, Cys-48, Cys-50, Cys-53, Cys-95, and Cys-98.

This sequence belongs to the Gfa family. Zn(2+) serves as cofactor.

It catalyses the reaction S-(hydroxymethyl)glutathione = glutathione + formaldehyde. It participates in one-carbon metabolism; formaldehyde degradation; formate from formaldehyde (glutathione route): step 1/3. Catalyzes the condensation of formaldehyde and glutathione to S-hydroxymethylglutathione. The sequence is that of Glutathione-dependent formaldehyde-activating enzyme from Mesorhizobium japonicum (strain LMG 29417 / CECT 9101 / MAFF 303099) (Mesorhizobium loti (strain MAFF 303099)).